We begin with the raw amino-acid sequence, 363 residues long: Aminomethyltransferase (363 aa).

Belongs to the GcvT family. As to quaternary structure, the glycine cleavage system is composed of four proteins: P, T, L and H.

The catalysed reaction is N(6)-[(R)-S(8)-aminomethyldihydrolipoyl]-L-lysyl-[protein] + (6S)-5,6,7,8-tetrahydrofolate = N(6)-[(R)-dihydrolipoyl]-L-lysyl-[protein] + (6R)-5,10-methylene-5,6,7,8-tetrahydrofolate + NH4(+). Functionally, the glycine cleavage system catalyzes the degradation of glycine. The chain is Aminomethyltransferase from Nitrosomonas europaea (strain ATCC 19718 / CIP 103999 / KCTC 2705 / NBRC 14298).